The chain runs to 445 residues: Phosphoglucosamine mutase 1 (445 aa).

The Phosphoserine intermediate role is filled by Ser102. Residues Ser102, Asp241, Asp243, and Asp245 each contribute to the Mg(2+) site. At Ser102 the chain carries Phosphoserine.

Belongs to the phosphohexose mutase family. It depends on Mg(2+) as a cofactor. In terms of processing, activated by phosphorylation.

It carries out the reaction alpha-D-glucosamine 1-phosphate = D-glucosamine 6-phosphate. Its function is as follows. Catalyzes the conversion of glucosamine-6-phosphate to glucosamine-1-phosphate. The protein is Phosphoglucosamine mutase 1 of Shewanella sp. (strain MR-7).